We begin with the raw amino-acid sequence, 150 residues long: Large ribosomal subunit protein bL9 (150 aa).

This sequence belongs to the bacterial ribosomal protein bL9 family.

Binds to the 23S rRNA. The polypeptide is Large ribosomal subunit protein bL9 (Vibrio atlanticus (strain LGP32) (Vibrio splendidus (strain Mel32))).